The primary structure comprises 252 residues: MKELLNDFFLILQLLTRIPVNRNLLCRRENFRRGASFMPLVGVIVGGIQWIIYKLCIIIFSLNVSIVIVILAGIVLTGALHVDGLGDMCDGFFSFKEKGKIIEIMKDSRIGTYACLAIIIDILLKYSFFCSIVPSFSLIIIIAPVMSRFSIVFIAFIGKPAKSTGSGNLFVENIGKWQLFWAAFITVITLFFLMNMNFIYVIILIFAGLFMSFLFNVFCNRKAGGLTGDLLGANNEIVEILTMVMLCVIITK.

The next 7 helical transmembrane spans lie at Gly-34 to Lys-54, Leu-55 to Val-75, Tyr-113 to Val-133, Leu-138 to Gly-158, Ile-174 to Met-194, Phe-198 to Phe-218, and Leu-230 to Ile-250.

The protein belongs to the CobS family. It depends on Mg(2+) as a cofactor.

The protein resides in the cell membrane. It catalyses the reaction alpha-ribazole + adenosylcob(III)inamide-GDP = adenosylcob(III)alamin + GMP + H(+). The catalysed reaction is alpha-ribazole 5'-phosphate + adenosylcob(III)inamide-GDP = adenosylcob(III)alamin 5'-phosphate + GMP + H(+). The protein operates within cofactor biosynthesis; adenosylcobalamin biosynthesis; adenosylcobalamin from cob(II)yrinate a,c-diamide: step 7/7. Joins adenosylcobinamide-GDP and alpha-ribazole to generate adenosylcobalamin (Ado-cobalamin). Also synthesizes adenosylcobalamin 5'-phosphate from adenosylcobinamide-GDP and alpha-ribazole 5'-phosphate. The protein is Adenosylcobinamide-GDP ribazoletransferase of Clostridium kluyveri (strain NBRC 12016).